The chain runs to 181 residues: Small ribosomal subunit protein uS4 (181 aa).

Residues arginine 106–valine 168 form the S4 RNA-binding domain.

The protein belongs to the universal ribosomal protein uS4 family. As to quaternary structure, part of the 30S ribosomal subunit. Contacts protein S5. The interaction surface between S4 and S5 is involved in control of translational fidelity.

Functionally, one of the primary rRNA binding proteins, it binds directly to 16S rRNA where it nucleates assembly of the body of the 30S subunit. Its function is as follows. With S5 and S12 plays an important role in translational accuracy. The sequence is that of Small ribosomal subunit protein uS4 from Caldivirga maquilingensis (strain ATCC 700844 / DSM 13496 / JCM 10307 / IC-167).